The following is a 129-amino-acid chain: Succinate dehydrogenase cytochrome b556 subunit (129 aa).

The Cytoplasmic segment spans residues 1-26 (MIRNVKKQRPVNLDLQTIRFPITAIA). Residues 27-52 (SILHRVSGVITFIAVGILLWLLGTSL) traverse the membrane as a helical segment. Residues 53-68 (SSPEGFQQAADIMDGF) are Periplasmic-facing. The helical transmembrane segment at 69–89 (IVKFIMWGILTALAYHVIVGI) threads the bilayer. H84 contributes to the heme binding site. The Cytoplasmic portion of the chain corresponds to 90–108 (RHMLMDFGYLEETFEAGQR). The helical transmembrane segment at 109–129 (SAKISFVITVVLSLLAGVLVW) threads the bilayer.

The protein belongs to the cytochrome b560 family. In terms of assembly, part of an enzyme complex containing four subunits: a flavoprotein, an iron-sulfur protein, plus two membrane-anchoring proteins, SdhC and SdhD. The complex can form homotrimers. The cofactor is heme.

The protein localises to the cell inner membrane. The protein operates within carbohydrate metabolism; tricarboxylic acid cycle. Its function is as follows. Membrane-anchoring subunit of succinate dehydrogenase (SDH). This is Succinate dehydrogenase cytochrome b556 subunit (sdhC) from Salmonella typhi.